A 511-amino-acid polypeptide reads, in one-letter code: V-type proton ATPase subunit B (511 aa).

ATP is bound at residue Arg381. The segment at 484 to 511 (FYGRDREQDDDEEEEEDPDKSGDKLIDA) is disordered. Residues 491 to 501 (QDDDEEEEEDP) show a composition bias toward acidic residues. Positions 502 to 511 (DKSGDKLIDA) are enriched in basic and acidic residues.

The protein belongs to the ATPase alpha/beta chains family. V-ATPase is a heteromultimeric enzyme composed of a peripheral catalytic V1 complex (components A to H) attached to an integral membrane V0 proton pore complex (components: a, c, c', c'', d, e, f and VOA1).

The protein localises to the vacuole membrane. Non-catalytic subunit of the V1 complex of vacuolar(H+)-ATPase (V-ATPase), a multisubunit enzyme composed of a peripheral complex (V1) that hydrolyzes ATP and a membrane integral complex (V0) that translocates protons. V-ATPase is responsible for acidifying and maintaining the pH of intracellular compartments. This is V-type proton ATPase subunit B (VMA2) from Candida tropicalis (Yeast).